The following is a 1029-amino-acid chain: Cilia- and flagella-associated protein 91 (1029 aa).

2 disordered regions span residues 72 to 97 (NYRPAANDPNDTRQRSDALAVSGPNR) and 117 to 170 (PPSQ…PWEP). The stretch at 272–299 (LELLDNALQVREEELDDENRLRVEARKE) forms a coiled coil. The segment covering 837–854 (ENQDQQEPQPQPQPSSSS) has biased composition (low complexity). Disordered regions lie at residues 837–861 (ENQDQQEPQPQPQPSSSSGALDLAD) and 876–1029 (GEPS…EAAE). Over residues 890-910 (QQLEADAEAEAEAEAEAEAGA) the composition is skewed to acidic residues. The span at 911–921 (EAEASAQAGAE) shows a compositional bias: low complexity. Over residues 922 to 932 (AEAEAGVEAEA) the composition is skewed to acidic residues. A compositionally biased stretch (low complexity) spans 933-944 (EASAGAEASVGA). The span at 964-982 (PEAEAEAEAGAEAEAENGA) shows a compositional bias: acidic residues. Residues 984–999 (AEARLGGEEEGFREGE) show a composition bias toward basic and acidic residues. Positions 1000–1015 (GQGGAAAGEAGPGGEL) are enriched in gly residues. The segment covering 1016–1029 (AEGEGEAGEGEAAE) has biased composition (acidic residues).

Belongs to the CFAP91 family. Identified in a spoke-associated complex containing CFAP61, CFAP91 and CFAP251; the complex is associated with the radial spokes of the axoneme. The complex associates with Calmodulin; the association is calcium sensitive. Interacts with RSP3.

It is found in the cytoplasm. Its subcellular location is the cytoskeleton. The protein localises to the flagellum axoneme. Its function is as follows. As component of a spoke-associated complex, regulates flagellar dynein activity by mediating regulatory signals between the radial spokes and dynein arms. The protein is Cilia- and flagella-associated protein 91 of Chlamydomonas reinhardtii (Chlamydomonas smithii).